We begin with the raw amino-acid sequence, 626 residues long: Serine/threonine-protein kinase PknB (626 aa).

At 1 to 332 (MTTPSHLSDR…DRSIGSVGRW (332 aa)) the chain is on the cytoplasmic side. The Protein kinase domain occupies 11–274 (YELGEILGFG…TAAEMRADLV (264 aa)). ATP is bound by residues 17–25 (LGFGGMSEV), lysine 40, and 93–95 (EYV). Aspartate 138 serves as the catalytic Proton acceptor. ATP is bound by residues 140–143 (KPAN) and aspartate 156. Asparagine 143 and aspartate 156 together coordinate Mg(2+). Residues serine 166 and serine 169 each carry the phosphoserine; by autocatalysis modification. A phosphothreonine; by autocatalysis mark is found at threonine 171, threonine 173, and threonine 294. Position 295 is a phosphoserine; by autocatalysis (serine 295). Residues 299–323 (SAAGNLSGPRTDPLPRQDLDDTDRD) are disordered. Threonine 309 carries the phosphothreonine; by autocatalysis modification. A compositionally biased stretch (basic and acidic residues) spans 311–323 (PLPRQDLDDTDRD). Residues 333–353 (VAVVAVLAVLTVVVTIAINTF) form a helical membrane-spanning segment. At 354–626 (GGITRDVQVP…DGIITLRFGQ (273 aa)) the chain is on the extracellular side. 4 consecutive PASTA domains span residues 356 to 422 (ITRD…NVST), 423 to 490 (GPEQ…IVGS), 491 to 557 (GPAT…QVSK), and 558 to 626 (GNQF…RFGQ).

The protein belongs to the protein kinase superfamily. Ser/Thr protein kinase family. Homodimer. Autophosphorylated. Dephosphorylated by PstP.

Its subcellular location is the cell membrane. The catalysed reaction is L-seryl-[protein] + ATP = O-phospho-L-seryl-[protein] + ADP + H(+). It catalyses the reaction L-threonyl-[protein] + ATP = O-phospho-L-threonyl-[protein] + ADP + H(+). Its function is as follows. Protein kinase that regulates many aspects of mycobacterial physiology. Is a key component of a signal transduction pathway that regulates cell growth, cell shape and cell division via phosphorylation of target proteins. The chain is Serine/threonine-protein kinase PknB (pknB) from Mycobacterium bovis (strain ATCC BAA-935 / AF2122/97).